A 443-amino-acid chain; its full sequence is MHVTVEDQSTIKKVLHVEIPVEVVSRELNAGFDQIRKTAKIKGFRPGKAPMSMLKRLYKDQVHADVSIQLIQSSLPNAIREKALNIIGDPQINPSVLSEEGPFTYSATIEIKPEIDDIDFKGLTLKKPLYACTDEEVDHQLTLLRKNLAKLQDIAEPRPAQEKDAAIIDYQARLDGQPVADLPDEQEFHLRIGSGAIDKTFDQQVVGMTVGETRTFEVTFPETHGSKTLAGNTISFTVTLKSLKEEILPELNDELAAQFGPFDSLDQLKTEIRKNLQSGYDRRGEQELHEQVFTALLEKTSFEVPETMVQHELDGILDEIDRTYSAYNLSLEALGQTKEALSEKYRDTAVKQAKRHLILNKIIDQEKMAISDDELAEGFESIAKSMGQPADMVKQYYQGNPEQIDVLRYTLLEKKAMRIIIEGSTVEEVTPDPSSPDTAGDQA.

In terms of domain architecture, PPIase FKBP-type spans 163–249; the sequence is KDAAIIDYQA…LKSLKEEILP (87 aa).

It belongs to the FKBP-type PPIase family. Tig subfamily.

The protein resides in the cytoplasm. It catalyses the reaction [protein]-peptidylproline (omega=180) = [protein]-peptidylproline (omega=0). Involved in protein export. Acts as a chaperone by maintaining the newly synthesized protein in an open conformation. Functions as a peptidyl-prolyl cis-trans isomerase. This is Trigger factor from Desulfosudis oleivorans (strain DSM 6200 / JCM 39069 / Hxd3) (Desulfococcus oleovorans).